We begin with the raw amino-acid sequence, 811 residues long: Elongation factor G, mitochondrial (811 aa).

Residues M1–A64 constitute a mitochondrion transit peptide. Residues R96–S394 form the tr-type G domain. GTP-binding positions include A105–T112, D192–H196, and N246–D249.

Belongs to the TRAFAC class translation factor GTPase superfamily. Classic translation factor GTPase family. EF-G/EF-2 subfamily.

The protein localises to the mitochondrion. Its pathway is protein biosynthesis; polypeptide chain elongation. Mitochondrial GTPase that catalyzes the GTP-dependent ribosomal translocation step during translation elongation. During this step, the ribosome changes from the pre-translocational (PRE) to the post-translocational (POST) state as the newly formed A-site-bound peptidyl-tRNA and P-site-bound deacylated tRNA move to the P and E sites, respectively. Catalyzes the coordinated movement of the two tRNA molecules, the mRNA and conformational changes in the ribosome. This Cryptococcus neoformans var. neoformans serotype D (strain JEC21 / ATCC MYA-565) (Filobasidiella neoformans) protein is Elongation factor G, mitochondrial.